The following is a 637-amino-acid chain: Glutamate--cysteine ligase catalytic subunit (637 aa).

Met1 carries the N-acetylmethionine modification. 2 positions are modified to phosphoserine: Ser5 and Ser8.

This sequence belongs to the glutamate--cysteine ligase type 3 family. In terms of assembly, heterodimer of a catalytic heavy chain and a regulatory light chain.

The enzyme catalyses L-cysteine + L-glutamate + ATP = gamma-L-glutamyl-L-cysteine + ADP + phosphate + H(+). It carries out the reaction (2S)-2-aminobutanoate + L-glutamate + ATP = gamma-L-glutamyl-(2S)-2-aminobutanoate + ADP + phosphate + H(+). Its pathway is sulfur metabolism; glutathione biosynthesis; glutathione from L-cysteine and L-glutamate: step 1/2. Its activity is regulated as follows. Feedback inhibition by glutathione. Its function is as follows. Catalyzes the ATP-dependent ligation of L-glutamate and L-cysteine and participates in the first and rate-limiting step in glutathione biosynthesis. This is Glutamate--cysteine ligase catalytic subunit from Homo sapiens (Human).